A 310-amino-acid chain; its full sequence is Isoaspartyl peptidase/L-asparaginase (310 aa).

The active-site Nucleophile is the T167. Substrate is bound by residues 195–198 (RVGD) and 218–221 (TGHG).

Belongs to the Ntn-hydrolase family. In terms of assembly, heterodimer of an alpha and beta chain produced by autocleavage. Post-translationally, cleaved into an alpha and beta chain by autocatalysis; this activates the enzyme. The N-terminal residue of the beta subunit is responsible for the nucleophile hydrolase activity.

Its subcellular location is the cytoplasm. The catalysed reaction is L-asparagine + H2O = L-aspartate + NH4(+). It carries out the reaction Cleavage of a beta-linked Asp residue from the N-terminus of a polypeptide.. Functionally, has both L-asparaginase and beta-aspartyl peptidase activity. Does not have aspartylglucosaminidase activity and is inactive toward GlcNAc-L-Asn. Likewise, has no activity toward glutamine. This is Isoaspartyl peptidase/L-asparaginase (asrgl1) from Danio rerio (Zebrafish).